The sequence spans 65 residues: Small ribosomal subunit protein bS21 (65 aa).

It belongs to the bacterial ribosomal protein bS21 family.

The sequence is that of Small ribosomal subunit protein bS21 from Acidobacterium capsulatum (strain ATCC 51196 / DSM 11244 / BCRC 80197 / JCM 7670 / NBRC 15755 / NCIMB 13165 / 161).